Here is a 158-residue protein sequence, read N- to C-terminus: C-type lectin mannose-binding isoform (158 aa).

The signal sequence occupies residues 1 to 23 (MGRFLLVTLSLLVGAFSLNEANS). Cystine bridges form between C26–C37, C54–C154, C61–C156, and C129–C146. Residues 33–155 (KNGFCYKVFN…CKALYSFICQ (123 aa)) enclose the C-type lectin domain. A Mannose-binding motif is present at residues 119 to 121 (EPN). N121 is a glycosylation site (N-linked (GlcNAc...) asparagine). The Ca(2+) site is built by E127, N142, and D143.

This sequence belongs to the true venom lectin family. Dimer. Probably disulfide-linked homodimer. Expressed by the venom gland.

The protein resides in the secreted. In terms of biological role, mannose-binding lectin that binds to and agglutinates rabbit (but not human) erythrocytes in a calcium-dependent manner. The sequence is that of C-type lectin mannose-binding isoform from Oxyuranus scutellatus (Coastal taipan).